Here is a 232-residue protein sequence, read N- to C-terminus: tRNA (guanine-N(1)-)-methyltransferase (232 aa).

S-adenosyl-L-methionine-binding positions include G111 and I131–L136.

This sequence belongs to the RNA methyltransferase TrmD family. Homodimer.

It is found in the cytoplasm. The enzyme catalyses guanosine(37) in tRNA + S-adenosyl-L-methionine = N(1)-methylguanosine(37) in tRNA + S-adenosyl-L-homocysteine + H(+). In terms of biological role, specifically methylates guanosine-37 in various tRNAs. The chain is tRNA (guanine-N(1)-)-methyltransferase from Bartonella tribocorum (strain CIP 105476 / IBS 506).